Here is a 280-residue protein sequence, read N- to C-terminus: uncharacterized protein (280 aa).

It belongs to the herpesviridae BDLF2 family.

This is an uncharacterized protein from Saimiri sciureus (Common squirrel monkey).